Reading from the N-terminus, the 453-residue chain is MRDSLGPFRTFTLLTVGLLLSLCVIKTVKHRRRYHRLPTPPHSMLLGNLGVVLAEILASPEGFFHLFCVENIRRKYNMPSVFYLDLWPILPSIMVVAEPAVAKHMTQVQPLQRERFSPNLFSPLLTAEFILAMEQKNWKKENPALNAALTSTRVNEATSLLAPSLHSLRSRLHSISQSGKQYPIKDLLISYIIEVGGVIQLGGSFDLLAETSALDPIIKRSLDMMGWNPVKRYIYSKEIKQRTDCLNKVLVETIQNTAQTGESGKMSQSPIYLAHYCYLFLHKHPDCLREMREEHDRVFSPDRTQTWELLQKEPHRINSLHFTLAVVKETLRLIGVGGAFICHLAMGRRADLFPDPDAFRPHRFLPGANPSIPADSFRPFEKGHLSCPGQNLALKSLVLLLLTTSREFDLVPVFPKGAPQAAEYLGGKGYPEFHIGPHVNKGMPVMVHTRVDA.

The next 2 membrane-spanning stretches (helical) occupy residues 5–25 (LGPF…LCVI) and 49–69 (LGVV…LFCV). Cys-387 serves as a coordination point for heme.

The protein belongs to the cytochrome P450 family. The cofactor is heme.

It localises to the membrane. It functions in the pathway secondary metabolite biosynthesis. Cytochrome P450 monooxygenase; part of the gene cluster that mediates the biosynthesis of the indole diterpenes penitrems. The geranylgeranyl diphosphate (GGPP) synthase penG catalyzes the first step in penitrem biosynthesis via conversion of farnesyl pyrophosphate and isopentyl pyrophosphate into geranylgeranyl pyrophosphate (GGPP). Condensation of indole-3-glycerol phosphate with GGPP by the prenyl transferase penC then forms 3-geranylgeranylindole (3-GGI). Epoxidation by the FAD-dependent monooxygenase penM leads to a epoxidized-GGI that is substrate of the terpene cyclase penB for cyclization to yield paspaline. Paspaline is subsequently converted to 13-desoxypaxilline by the cytochrome P450 monooxygenase penP, the latter being then converted to paxilline by the cytochrome P450 monooxygenase penQ. Paxilline is converted to beta-paxitriol via C-10 ketoreduction by the short-chain dehydrogenase PC-15 which can be monoprenylated at the C-20 by the indole diterpene prenyltransferase penD. A two-step elimination (acetylation and elimination) process performed by the O-acetyltransferase PC-16 and the P.simplicissimum ptmI-ortholog not yet identified in P.crustosum, leads to the production of the prenylated form of penijanthine. The FAD-linked oxidoreductase ptmO then converts the prenylated form of penijanthine into PC-M5 which is in turn transformed into PC-M4 by the aromatic dimethylallyltransferase PC-22. A series of oxidation steps involving 4 cytochrome P450 monooxygenases (PC-21, PC-05, PC-23, PC-20) and a FAD-dependent monooxygenase (PC-14) are required for the transformation of PC-M4 to penitrems A and E. Synthesis of these final products is proposed to proceed via penitrems D and C (PC-21, PC-05, PC-14) and penitrems B and F (PC-21, PC-05, PC-14, PC-23). This chain is Cytochrome P450 monooxygenase PC-20, found in Penicillium crustosum (Blue mold fungus).